Here is a 340-residue protein sequence, read N- to C-terminus: Protein RecA (340 aa).

65-72 contributes to the ATP binding site; that stretch reads GPESGGKT.

Belongs to the RecA family.

The protein resides in the cytoplasm. In terms of biological role, can catalyze the hydrolysis of ATP in the presence of single-stranded DNA, the ATP-dependent uptake of single-stranded DNA by duplex DNA, and the ATP-dependent hybridization of homologous single-stranded DNAs. It interacts with LexA causing its activation and leading to its autocatalytic cleavage. This Thermus thermophilus (strain ATCC 27634 / DSM 579 / HB8) protein is Protein RecA.